The following is a 166-amino-acid chain: MSSKDFFACGHSGHWARGCPRGGAGGRRGGGHGRGSQCGSTTLSYTCYCCGESGRNAKNCVLLGNICYNCGRSGHIAKDCKDPKRERRQHCYTCGRLGHLARDCDRQKEQKCYSCGKLGHIQKDCAQVKCYRCGEIGHVAINCSKARPGQLLPLRQIPTSSQGMSQ.

A CCHC-type 1; degenerate zinc finger spans residues 4–21 (KDFFACGHSGHWARGCPR). A CCHC-type 2; degenerate zinc finger spans residues 45–62 (YTCYCCGESGRNAKNCVL). 4 consecutive CCHC-type zinc fingers follow at residues 65–82 (NICY…DCKD), 89–106 (QHCY…DCDR), 110–127 (QKCY…DCAQ), and 128–145 (VKCY…NCSK).

The chain is Zinc finger CCHC domain-containing protein 13 (ZCCHC13) from Homo sapiens (Human).